Here is a 563-residue protein sequence, read N- to C-terminus: Putative cysteine ligase BshC (563 aa).

It belongs to the BshC family.

The protein is Putative cysteine ligase BshC of Chlorobium phaeobacteroides (strain BS1).